Reading from the N-terminus, the 66-residue chain is Large ribosomal subunit protein uL29 (66 aa).

The protein belongs to the universal ribosomal protein uL29 family.

The sequence is that of Large ribosomal subunit protein uL29 from Thermosipho melanesiensis (strain DSM 12029 / CIP 104789 / BI429).